The primary structure comprises 339 residues: Methylthioribose-1-phosphate isomerase (339 aa).

Residues 52 to 54 (RGA), Arg-89, and Gln-188 contribute to the substrate site. Asp-229 (proton donor) is an active-site residue. Residue 239 to 240 (NK) coordinates substrate.

This sequence belongs to the eIF-2B alpha/beta/delta subunits family. MtnA subfamily.

The enzyme catalyses 5-(methylsulfanyl)-alpha-D-ribose 1-phosphate = 5-(methylsulfanyl)-D-ribulose 1-phosphate. It participates in amino-acid biosynthesis; L-methionine biosynthesis via salvage pathway; L-methionine from S-methyl-5-thio-alpha-D-ribose 1-phosphate: step 1/6. Functionally, catalyzes the interconversion of methylthioribose-1-phosphate (MTR-1-P) into methylthioribulose-1-phosphate (MTRu-1-P). The polypeptide is Methylthioribose-1-phosphate isomerase (Anaeromyxobacter dehalogenans (strain 2CP-C)).